Reading from the N-terminus, the 594-residue chain is Type IV inositol polyphosphate 5-phosphatase 7 (594 aa).

The disordered stretch occupies residues 246 to 300 (FRCGHRPSDYSRRPSDYSRPSDYYSRPSNYSRPSDVSRWGSSDDDNGPGDSPSTF). Over residues 251-261 (RPSDYSRRPSD) the composition is skewed to basic and acidic residues. Positions 262-279 (YSRPSDYYSRPSNYSRPS) are enriched in low complexity. Catalytic stretches follow at residues 435–450 (DRVIWLGDLNYRIALS) and 515–530 (KRRTPAWCDRILWHGE).

The protein belongs to the inositol polyphosphate 5-phosphatase family. As to expression, broadly expressed in emerging organs. Mostly localized in procambium of growing organs. Restricted to vascular differentiating cells of young organs.

The protein localises to the nucleus. Its subcellular location is the cell membrane. It catalyses the reaction a 1,2-diacyl-sn-glycero-3-phospho-(1D-myo-inositol-4,5-bisphosphate) + H2O = a 1,2-diacyl-sn-glycero-3-phospho-(1D-myo-inositol 4-phosphate) + phosphate. The enzyme catalyses a 1,2-diacyl-sn-glycero-3-phospho-(1D-myo-inositol-3,4,5-trisphosphate) + H2O = a 1,2-diacyl-sn-glycero-3-phospho-(1D-myo-inositol-3,4-bisphosphate) + phosphate. Functionally, has phosphatase activity toward PtdIns(4,5)P2 and at a lower extent toward PtdIns(3,4,5)P3 but not toward Ins(1,4,5)P3. Acts redundantly with CVP2 for maintaining vascular continuity. Regulates phosphoinositide-dependent VAN3 localization. Functions in salt stress response by regulating reactive oxygen species (ROS) production and stress-responsive genes expression. The chain is Type IV inositol polyphosphate 5-phosphatase 7 from Arabidopsis thaliana (Mouse-ear cress).